Consider the following 367-residue polypeptide: Anhydro-N-acetylmuramic acid kinase (367 aa).

Glycine 13 to aspartate 20 provides a ligand contact to ATP.

This sequence belongs to the anhydro-N-acetylmuramic acid kinase family.

The enzyme catalyses 1,6-anhydro-N-acetyl-beta-muramate + ATP + H2O = N-acetyl-D-muramate 6-phosphate + ADP + H(+). It participates in amino-sugar metabolism; 1,6-anhydro-N-acetylmuramate degradation. It functions in the pathway cell wall biogenesis; peptidoglycan recycling. Its function is as follows. Catalyzes the specific phosphorylation of 1,6-anhydro-N-acetylmuramic acid (anhMurNAc) with the simultaneous cleavage of the 1,6-anhydro ring, generating MurNAc-6-P. Is required for the utilization of anhMurNAc either imported from the medium or derived from its own cell wall murein, and thus plays a role in cell wall recycling. This chain is Anhydro-N-acetylmuramic acid kinase, found in Neisseria gonorrhoeae (strain ATCC 700825 / FA 1090).